A 215-amino-acid chain; its full sequence is UPF0502 protein YceH (215 aa).

Lys-80 carries the post-translational modification N6-acetyllysine.

It belongs to the UPF0502 family.

The chain is UPF0502 protein YceH from Escherichia coli O7:K1 (strain IAI39 / ExPEC).